The following is a 178-amino-acid chain: High mobility group B protein 1 (178 aa).

Basic and acidic residues-rich tracts occupy residues M1–K52 and A101–M118. Disordered regions lie at residues M1–A59 and N75–D178. A DNA-binding region (HMG box) is located at residues P53–N122. S137 and S146 each carry phosphoserine. Positions N140–D178 are enriched in acidic residues.

This sequence belongs to the HMGB family. Expressed in cotyledons, roots, stems, leaves and flowers (excluding pedicels).

Its subcellular location is the nucleus. Binds preferentially double-stranded DNA. Modulates general plant growth and stress tolerance. Confers sensitivity to salt and genotoxic (methyl methanesulfonate, MMS) stresses. This Arabidopsis thaliana (Mouse-ear cress) protein is High mobility group B protein 1 (HMGB1).